The primary structure comprises 772 residues: Semaphorin-3A (772 aa).

An N-terminal signal peptide occupies residues 1–20 (MGWFTGIACLFWGILLTARA). Residues 31-514 (RLKLSYKEML…STAGVAQLPL (484 aa)) enclose the Sema domain. Residue Asn-53 is glycosylated (N-linked (GlcNAc...) asparagine). Cysteines 103 and 114 form a disulfide. A glycan (N-linked (GlcNAc...) asparagine) is linked at Asn-125. Cystine bridges form between Cys-132–Cys-141, Cys-269–Cys-381, Cys-293–Cys-341, and Cys-517–Cys-535. The region spanning 577 to 665 (HGHSLEERII…GFMQTLLKVT (89 aa)) is the Ig-like C2-type domain. A glycan (N-linked (GlcNAc...) asparagine) is linked at Asn-591. Cys-650 and Cys-723 form a disulfide bridge. The span at 677–691 (LLHKDDDGDGSKTKE) shows a compositional bias: basic and acidic residues. Disordered stretches follow at residues 677 to 698 (LLHKDDDGDGSKTKEMSSSMTP) and 729 to 772 (RDRK…PRSV). The span at 729–738 (RDRKQRRQRP) shows a compositional bias: basic residues. Residues 750–772 (HMQESKKGRNRRTHEFERAPRSV) are compositionally biased toward basic and acidic residues.

This sequence belongs to the semaphorin family. As to quaternary structure, interacts with PLXND1. As to expression, expressed in the dorsal root ganglia.

Its subcellular location is the secreted. Its function is as follows. May be involved in guiding growing axons towards their targets by forming a molecular boundary that instructs axons to engage in the formation of specific nerve tracts. Binds to neuropilin. Involved in the development of the olfactory system and in neuronal control of puberty. The protein is Semaphorin-3A (Sema3a) of Rattus norvegicus (Rat).